The primary structure comprises 222 residues: Sugar fermentation stimulation protein homolog (222 aa).

This sequence belongs to the SfsA family.

The protein is Sugar fermentation stimulation protein homolog of Thermotoga maritima (strain ATCC 43589 / DSM 3109 / JCM 10099 / NBRC 100826 / MSB8).